The chain runs to 185 residues: Large ribosomal subunit protein uL5 (185 aa).

The protein belongs to the universal ribosomal protein uL5 family. As to quaternary structure, part of the 50S ribosomal subunit; part of the 5S rRNA/L5/L18/L25 subcomplex. Contacts the 5S rRNA and the P site tRNA. Forms a bridge to the 30S subunit in the 70S ribosome.

Functionally, this is one of the proteins that bind and probably mediate the attachment of the 5S RNA into the large ribosomal subunit, where it forms part of the central protuberance. In the 70S ribosome it contacts protein S13 of the 30S subunit (bridge B1b), connecting the 2 subunits; this bridge is implicated in subunit movement. Contacts the P site tRNA; the 5S rRNA and some of its associated proteins might help stabilize positioning of ribosome-bound tRNAs. The polypeptide is Large ribosomal subunit protein uL5 (Rhizobium etli (strain ATCC 51251 / DSM 11541 / JCM 21823 / NBRC 15573 / CFN 42)).